A 177-amino-acid polypeptide reads, in one-letter code: Protein SOB FIVE-LIKE 6 (177 aa).

The short motif at 14 to 19 (SGWTMY) is the SOFL-A element. Disordered regions lie at residues 37–60 (ETKQ…PYYC) and 78–104 (KSKS…FNSS). Residues 47–56 (SMVSDASSGP) carry the SOFL-B motif. Basic residues predominate over residues 79–90 (SKSKNKNKNKKK).

This sequence belongs to the SOFL plant protein family. In terms of tissue distribution, expressed in seedlings, flowers and siliques. Barely detectable in roots and leaves.

It is found in the cytoplasm. The protein resides in the nucleus. In terms of biological role, involved in cytokinin-mediated development. The chain is Protein SOB FIVE-LIKE 6 from Arabidopsis thaliana (Mouse-ear cress).